The chain runs to 347 residues: ATP-dependent (S)-NAD(P)H-hydrate dehydratase (347 aa).

Residues 53 to 344 (TLQLVRNIIP…AEVGAAFSKL (292 aa)) form the YjeF C-terminal domain. Tyr-85 bears the Phosphotyrosine mark. (6S)-NADPHX-binding positions include Gly-153 and 206–212 (NHVEFSR). Asn-240 carries an N-linked (GlcNAc...) asparagine glycan. ATP contacts are provided by residues 246 to 250 (KGERD) and 265 to 274 (GSSRRCGGQG). Asp-275 lines the (6S)-NADPHX pocket. Asn-297 carries an N-linked (GlcNAc...) asparagine glycan.

It belongs to the NnrD/CARKD family. Mg(2+) is required as a cofactor.

The protein localises to the mitochondrion. The catalysed reaction is (6S)-NADHX + ATP = ADP + phosphate + NADH + H(+). It catalyses the reaction (6S)-NADPHX + ATP = ADP + phosphate + NADPH + H(+). Functionally, catalyzes the dehydration of the S-form of NAD(P)HX at the expense of ATP, which is converted to ADP. Together with NAD(P)HX epimerase, which catalyzes the epimerization of the S- and R-forms, the enzyme allows the repair of both epimers of NAD(P)HX, a damaged form of NAD(P)H that is a result of enzymatic or heat-dependent hydration. The sequence is that of ATP-dependent (S)-NAD(P)H-hydrate dehydratase from Homo sapiens (Human).